The primary structure comprises 123 residues: Small ribosomal subunit protein uS12 (123 aa).

D89 carries the post-translational modification 3-methylthioaspartic acid.

Belongs to the universal ribosomal protein uS12 family. As to quaternary structure, part of the 30S ribosomal subunit. Contacts proteins S8 and S17. May interact with IF1 in the 30S initiation complex.

In terms of biological role, with S4 and S5 plays an important role in translational accuracy. Its function is as follows. Interacts with and stabilizes bases of the 16S rRNA that are involved in tRNA selection in the A site and with the mRNA backbone. Located at the interface of the 30S and 50S subunits, it traverses the body of the 30S subunit contacting proteins on the other side and probably holding the rRNA structure together. The combined cluster of proteins S8, S12 and S17 appears to hold together the shoulder and platform of the 30S subunit. In Sinorhizobium medicae (strain WSM419) (Ensifer medicae), this protein is Small ribosomal subunit protein uS12.